A 235-amino-acid polypeptide reads, in one-letter code: Phosphoribosylaminoimidazole-succinocarboxamide synthase (235 aa).

Belongs to the SAICAR synthetase family.

It carries out the reaction 5-amino-1-(5-phospho-D-ribosyl)imidazole-4-carboxylate + L-aspartate + ATP = (2S)-2-[5-amino-1-(5-phospho-beta-D-ribosyl)imidazole-4-carboxamido]succinate + ADP + phosphate + 2 H(+). Its pathway is purine metabolism; IMP biosynthesis via de novo pathway; 5-amino-1-(5-phospho-D-ribosyl)imidazole-4-carboxamide from 5-amino-1-(5-phospho-D-ribosyl)imidazole-4-carboxylate: step 1/2. The polypeptide is Phosphoribosylaminoimidazole-succinocarboxamide synthase (Streptococcus thermophilus (strain ATCC BAA-250 / LMG 18311)).